The following is a 68-amino-acid chain: MVLRQLSRQASVKVGKTWTGTKRRAQRIFIFILELLLDFCRGEDSVDGKKKKDSLTDKTETVTEKKES.

Residues 1–24 (MVLRQLSRQASVKVGKTWTGTKRR) are Cytoplasmic-facing. 2 positions are modified to phosphoserine; by host: serine 7 and serine 11. At threonine 21 the chain carries Phosphothreonine; by host. Residues 25-41 (AQRIFIFILELLLDFCR) form a helical; Signal-anchor for type II membrane protein membrane-spanning segment. The Extracellular segment spans residues 42-68 (GEDSVDGKKKKDSLTDKTETVTEKKES). The interval 44–68 (DSVDGKKKKDSLTDKTETVTEKKES) is disordered.

The protein belongs to the polyomavirus agnoprotein family. As to quaternary structure, homooligomer. Interacts with VP1. Interacts with large T antigen; this interaction may impact upon the activity of T-antigen on the control of viral gene transcription and replication. Interacts with small t antigen. Interacts with host CBX5; this interaction induces the dissociation of CBX5 from LBR, resulting in destabilization of the nuclear envelope. In terms of processing, phosphorylated by host PKC. Phosphorylation alters the stability and may also have an impact on the subcellular location.

The protein resides in the host cytoplasm. The protein localises to the host nucleus membrane. Its subcellular location is the host rough endoplasmic reticulum membrane. It localises to the host cell membrane. Its function is as follows. Alters the structure of the nuclear envelope by interacting with host CBX5 and disrupting CBX5 association with LBR. Involved in the perinuclear-nuclear localization of the capsid protein VP1 during virion assembly and maturation. Plays an important role in the release of progeny virions from infected cells and in viral propagation, probably by acting as a viral ionic channel in the host plasma membrane. Allows influx of extracellular calcium ions in the host cell. May contribute to viral genome transcription and translation of viral late proteins. This chain is Agnoprotein, found in Simian virus 12 (strain wt100) (SV-12).